We begin with the raw amino-acid sequence, 307 residues long: Branched-chain-amino-acid aminotransferase (307 aa).

K160 carries the post-translational modification N6-(pyridoxal phosphate)lysine.

The protein belongs to the class-IV pyridoxal-phosphate-dependent aminotransferase family. The cofactor is pyridoxal 5'-phosphate.

It catalyses the reaction L-leucine + 2-oxoglutarate = 4-methyl-2-oxopentanoate + L-glutamate. The catalysed reaction is L-isoleucine + 2-oxoglutarate = (S)-3-methyl-2-oxopentanoate + L-glutamate. The enzyme catalyses L-valine + 2-oxoglutarate = 3-methyl-2-oxobutanoate + L-glutamate. Its pathway is amino-acid biosynthesis; L-isoleucine biosynthesis; L-isoleucine from 2-oxobutanoate: step 4/4. It functions in the pathway amino-acid biosynthesis; L-leucine biosynthesis; L-leucine from 3-methyl-2-oxobutanoate: step 4/4. The protein operates within amino-acid biosynthesis; L-valine biosynthesis; L-valine from pyruvate: step 4/4. Its function is as follows. Acts on leucine, isoleucine and valine. The chain is Branched-chain-amino-acid aminotransferase (ilvE) from Pseudomonas aeruginosa (strain ATCC 15692 / DSM 22644 / CIP 104116 / JCM 14847 / LMG 12228 / 1C / PRS 101 / PAO1).